The following is a 526-amino-acid chain: GMP synthase [glutamine-hydrolyzing] (526 aa).

The Glutamine amidotransferase type-1 domain maps to 14-208 (SILIVDFGSQ…VHDICGLAGD (195 aa)). Cys91 (nucleophile) is an active-site residue. Active-site residues include His182 and Glu184. In terms of domain architecture, GMPS ATP-PPase spans 209-401 (WTMAEFRQTK…LGMPDVFVDR (193 aa)). Residue 236–242 (SGGVDSS) coordinates ATP.

In terms of assembly, homodimer.

The enzyme catalyses XMP + L-glutamine + ATP + H2O = GMP + L-glutamate + AMP + diphosphate + 2 H(+). The protein operates within purine metabolism; GMP biosynthesis; GMP from XMP (L-Gln route): step 1/1. Functionally, catalyzes the synthesis of GMP from XMP. The protein is GMP synthase [glutamine-hydrolyzing] of Zymomonas mobilis subsp. mobilis (strain ATCC 31821 / ZM4 / CP4).